We begin with the raw amino-acid sequence, 141 residues long: Large ribosomal subunit protein uL11c (141 aa).

This sequence belongs to the universal ribosomal protein uL11 family. Part of the ribosomal stalk of the 50S ribosomal subunit. Interacts with L10 and the large rRNA to form the base of the stalk. L10 forms an elongated spine to which L12 dimers bind in a sequential fashion forming a multimeric L10(L12)X complex.

It is found in the plastid. Its subcellular location is the chloroplast. Forms part of the ribosomal stalk which helps the ribosome interact with GTP-bound translation factors. In Guillardia theta (Cryptophyte), this protein is Large ribosomal subunit protein uL11c.